Reading from the N-terminus, the 155-residue chain is Endoribonuclease YbeY (155 aa).

His-114, His-118, and His-124 together coordinate Zn(2+).

Belongs to the endoribonuclease YbeY family. The cofactor is Zn(2+).

It localises to the cytoplasm. Single strand-specific metallo-endoribonuclease involved in late-stage 70S ribosome quality control and in maturation of the 3' terminus of the 16S rRNA. The polypeptide is Endoribonuclease YbeY (Escherichia coli O1:K1 / APEC).